Consider the following 96-residue polypeptide: Beta-defensin 132 (96 aa).

Residues 1-22 form the signal peptide; sequence MKFLLLVLAALRFLTQVIPASG. Cystine bridges form between Cys27–Cys55, Cys35–Cys49, and Cys39–Cys56. Positions 74-96 are disordered; it reads HWQSRRRNTQRKDKKQQTTVTSS. Basic residues predominate over residues 76 to 87; the sequence is QSRRRNTQRKDK.

It belongs to the beta-defensin family.

The protein localises to the secreted. Its function is as follows. Has antibacterial activity. In Hylobates lar (Lar gibbon), this protein is Beta-defensin 132 (DEFB132).